Consider the following 107-residue polypeptide: Large ribosomal subunit protein uL24 (107 aa).

This sequence belongs to the universal ribosomal protein uL24 family. Part of the 50S ribosomal subunit.

In terms of biological role, one of two assembly initiator proteins, it binds directly to the 5'-end of the 23S rRNA, where it nucleates assembly of the 50S subunit. Functionally, one of the proteins that surrounds the polypeptide exit tunnel on the outside of the subunit. The polypeptide is Large ribosomal subunit protein uL24 (Malacoplasma penetrans (strain HF-2) (Mycoplasma penetrans)).